We begin with the raw amino-acid sequence, 318 residues long: Pheromone-regulated membrane protein 5 (318 aa).

The tract at residues 15–56 (TTSTSSTTTASSSSTITSVXSSSSSLPLLSNSTSSSIIPSIT) is disordered. A helical membrane pass occupies residues 78-98 (FIVVGGIAGVIFLAILLWWVI). Ser129 is modified (phosphoserine). Low complexity predominate over residues 238-247 (TISSSSASSL). The segment at 238 to 318 (TISSSSASSL…HMLEGKEQDE (81 aa)) is disordered. The segment covering 250 to 261 (GNEKEVGEDIRK) has biased composition (basic and acidic residues). Residues 276 to 285 (SPESDGSVNR) are compositionally biased toward polar residues. 3 positions are modified to phosphoserine: Ser279, Ser282, and Ser288. Basic and acidic residues predominate over residues 309-318 (HMLEGKEQDE). Residue Lys314 forms a Glycyl lysine isopeptide (Lys-Gly) (interchain with G-Cter in ubiquitin) linkage.

This sequence belongs to the PRM5 family.

It is found in the membrane. This is Pheromone-regulated membrane protein 5 (PRM5) from Saccharomyces cerevisiae (strain Lalvin QA23) (Baker's yeast).